Reading from the N-terminus, the 545-residue chain is T-box transcription factor TBX4 (545 aa).

Positions 71–251 (LHEKELWKKF…NNPFAKGFRG (181 aa)) form a DNA-binding region, T-box. Residues 479–509 (QSQVRERGPSASFPRERGLPQGCERKPPSPH) form a disordered region. A compositionally biased stretch (basic and acidic residues) spans 482–505 (VRERGPSASFPRERGLPQGCERKP). Residue Ser507 is modified to Phosphoserine.

It localises to the nucleus. Functionally, transcriptional regulator that has an essential role in the organogenesis of lungs, pelvis, and hindlimbs. The chain is T-box transcription factor TBX4 (TBX4) from Homo sapiens (Human).